The chain runs to 159 residues: Transcriptional repressor NrdR (159 aa).

A zinc finger spans residues 3–34; it reads CPYCQSEDTQVKDSRPAEDGAAIRRRRVCPDC. In terms of domain architecture, ATP-cone spans 49-139; the sequence is LVVVKKSGRK…VYRNFREAKD (91 aa).

Belongs to the NrdR family. Zn(2+) is required as a cofactor.

Its function is as follows. Negatively regulates transcription of bacterial ribonucleotide reductase nrd genes and operons by binding to NrdR-boxes. The polypeptide is Transcriptional repressor NrdR (Mesorhizobium japonicum (strain LMG 29417 / CECT 9101 / MAFF 303099) (Mesorhizobium loti (strain MAFF 303099))).